We begin with the raw amino-acid sequence, 359 residues long: Membrane-bound lytic murein transglycosylase C (359 aa).

The signal sequence occupies residues 1–16 (MKKYLALALIAPLLIS). Cysteine 17 carries N-palmitoyl cysteine lipidation. A lipid anchor (S-diacylglycerol cysteine) is attached at cysteine 17.

The protein belongs to the transglycosylase Slt family.

The protein resides in the cell outer membrane. It carries out the reaction Exolytic cleavage of the (1-&gt;4)-beta-glycosidic linkage between N-acetylmuramic acid (MurNAc) and N-acetylglucosamine (GlcNAc) residues in peptidoglycan, from either the reducing or the non-reducing ends of the peptidoglycan chains, with concomitant formation of a 1,6-anhydrobond in the MurNAc residue.. Functionally, murein-degrading enzyme. May play a role in recycling of muropeptides during cell elongation and/or cell division. The chain is Membrane-bound lytic murein transglycosylase C from Escherichia coli O81 (strain ED1a).